Here is a 235-residue protein sequence, read N- to C-terminus: MINKTKRLMVPRTVKIPRKTYFWGPTPLPGRHKADHSVTLLTIIRDYLRLSDKEREATRILANGLVKVDGKVVKERKFGVGFMDVIEISGESYRVVYNNQGALVLVSESKDRANMKPLQVKNKVIAPGNKIQLGFHDGRVMVTEDRSISVGDVVIASLPDMKITEIIKMQPGNKAFITGGSHVGETGTISKIEIKESSSANLVHFDEGFTTVKDHVFVIGSPRFTFTMPSGEVYP.

An S4 RNA-binding domain is found at 38 to 99 (VTLLTIIRDY…GESYRVVYNN (62 aa)).

This sequence belongs to the eukaryotic ribosomal protein eS4 family.

The polypeptide is Small ribosomal subunit protein eS4 (rps4e) (Thermoplasma volcanium (strain ATCC 51530 / DSM 4299 / JCM 9571 / NBRC 15438 / GSS1)).